The chain runs to 376 residues: Probable tRNA sulfurtransferase (376 aa).

In terms of domain architecture, THUMP spans 51–152; that stretch reads EENLKNLKYV…KNSVYVFDKS (102 aa). ATP contacts are provided by residues 170–171, 195–196, Arg252, Gly274, and Gln283; these read LI and TF.

It belongs to the ThiI family.

The protein resides in the cytoplasm. The enzyme catalyses [ThiI sulfur-carrier protein]-S-sulfanyl-L-cysteine + a uridine in tRNA + 2 reduced [2Fe-2S]-[ferredoxin] + ATP + H(+) = [ThiI sulfur-carrier protein]-L-cysteine + a 4-thiouridine in tRNA + 2 oxidized [2Fe-2S]-[ferredoxin] + AMP + diphosphate. It carries out the reaction [ThiS sulfur-carrier protein]-C-terminal Gly-Gly-AMP + S-sulfanyl-L-cysteinyl-[cysteine desulfurase] + AH2 = [ThiS sulfur-carrier protein]-C-terminal-Gly-aminoethanethioate + L-cysteinyl-[cysteine desulfurase] + A + AMP + 2 H(+). The protein operates within cofactor biosynthesis; thiamine diphosphate biosynthesis. Functionally, catalyzes the ATP-dependent transfer of a sulfur to tRNA to produce 4-thiouridine in position 8 of tRNAs, which functions as a near-UV photosensor. Also catalyzes the transfer of sulfur to the sulfur carrier protein ThiS, forming ThiS-thiocarboxylate. This is a step in the synthesis of thiazole, in the thiamine biosynthesis pathway. The sulfur is donated as persulfide by IscS. The chain is Probable tRNA sulfurtransferase from Mycoplasmopsis synoviae (strain 53) (Mycoplasma synoviae).